The primary structure comprises 556 residues: MAVRFLALGLLIFVTSCSGRRVCESQQSCDDEQCDETLNIAIVGAGPSGAYSAYKMRHSGKDVGLFEYCNRVGGRLYTYQLPNTPDVNLELGGMRYITGAHNILQEVTKELGLKSVLFTEGFGRPGRTRYFLRGQSLTHEEVQSGDVPYNLTTIEKLNQGRIYEYYLKELTGFDIGNGSISREQLLKLRVSDGRLLYQLTFDEALDLVASPEGKEFARDVHVFHTEVTSDANAVSVFDDHLGEDGAGDAILTVEEGMQKVPKELIKEFKKTSASNQVQLNKYLQAIRSKSDHSFVLYFRPTSTVDGKTTILDYRPLQRVCARQVILALPVFALRRLDWPPLHEGRAETAYAAVRNMAASKVFMTFDQAWWLDRNFTDNTAFVTKGDTPFSQMYDWKKSNVSGDYILIASYADGNNTLYQKVLRDQGESINGSEPGANRVSEPLKNNILDHLSEAYGVDRSTIPEPKTAVSQFWTDYPFGCGWITWRAGYHFDDVMSTMRRPSLKDEVYVVGADYSWGLMSSWTEGALETADAVLKDYFKGECAKPPSVDHLDSHMA.

The signal sequence occupies residues 1–19 (MAVRFLALGLLIFVTSCSG). N-linked (GlcNAc...) asparagine glycans are attached at residues asparagine 150, asparagine 177, asparagine 374, asparagine 399, asparagine 414, and asparagine 430.

It to A.fulica achacin protein. Homotetramer. As to expression, albumen gland.

Functionally, has antibacterial activity against Gram-negative and Gram-positive bacteria. In Aplysia kurodai (Kuroda's sea hare), this protein is Aplysianin-A.